The sequence spans 284 residues: tRNA uridine(34) hydroxylase (284 aa).

Residues 132–226 (TGRPVVMLDT…YFEEVGGAHY (95 aa)) enclose the Rhodanese domain. C186 acts as the Cysteine persulfide intermediate in catalysis.

This sequence belongs to the TrhO family.

The enzyme catalyses uridine(34) in tRNA + AH2 + O2 = 5-hydroxyuridine(34) in tRNA + A + H2O. Its function is as follows. Catalyzes oxygen-dependent 5-hydroxyuridine (ho5U) modification at position 34 in tRNAs. The protein is tRNA uridine(34) hydroxylase of Burkholderia lata (strain ATCC 17760 / DSM 23089 / LMG 22485 / NCIMB 9086 / R18194 / 383).